Here is a 610-residue protein sequence, read N- to C-terminus: Glutamine--fructose-6-phosphate aminotransferase [isomerizing] (610 aa).

Cys2 acts as the Nucleophile; for GATase activity in catalysis. One can recognise a Glutamine amidotransferase type-2 domain in the interval 2–221 (CGIVGAVAQR…DGDVVDLQLA (220 aa)). SIS domains are found at residues 286–426 (AYKV…TRGR) and 459–600 (WADR…VDKP). The For Fru-6P isomerization activity role is filled by Lys605.

Homodimer.

The protein localises to the cytoplasm. The catalysed reaction is D-fructose 6-phosphate + L-glutamine = D-glucosamine 6-phosphate + L-glutamate. Its function is as follows. Catalyzes the first step in hexosamine metabolism, converting fructose-6P into glucosamine-6P using glutamine as a nitrogen source. This is Glutamine--fructose-6-phosphate aminotransferase [isomerizing] from Bordetella bronchiseptica (strain ATCC BAA-588 / NCTC 13252 / RB50) (Alcaligenes bronchisepticus).